An 814-amino-acid polypeptide reads, in one-letter code: Coiled-coil and C2 domain-containing protein 1-like (814 aa).

Over residues 1 to 11 (MFAKRKPEPAK) the composition is skewed to basic and acidic residues. 2 disordered regions span residues 1–136 (MFAK…TFLP) and 157–263 (EANA…RSRQ). Acidic residues predominate over residues 25 to 47 (IPDDFDPTSGYGDDDGGDSDLEA). The span at 73-85 (DLDKMIADSLRDV) shows a compositional bias: basic and acidic residues. 2 stretches are compositionally biased toward acidic residues: residues 86 to 100 (SDDDDDENLENDSDL) and 110 to 130 (LEEEPEAEEAAAEPAASEEEP). The segment at 143–201 (LGIIKQRLEIYKQAEANAKASGDSGKARRFGRGLKTLQDLHKQAAAGKTINVDDIPPEV) is DM14 1. Low complexity predominate over residues 205-230 (PAGDPSPAADESPAPSTPVSQPTRVA). Residues 231-254 (PAPPTPTSPPAATPPPAPATPPNP) show a composition bias toward pro residues. DM14 stretches follow at residues 256–314 (VAQM…PPPP) and 358–416 (LEAL…PVPP). Residues 351–378 (AAAAESMLEALQRRLEKYKSVEAAAKAE) are a coiled coil. The span at 414–425 (VPPGFGPLPSTE) shows a compositional bias: pro residues. Residues 414 to 486 (VPPGFGPLPS…LTTRVTGNHQ (73 aa)) form a disordered region. Residues 426-462 (PAPAATPSLPTSPTSPPATASTSAGGTPSGSSATTPT) are compositionally biased toward low complexity. Residues 475 to 486 (TELTTRVTGNHQ) show a composition bias toward polar residues. The interval 495-553 (MKLLLERQKEFKVAAIEAKKAGEIDQAKEYLKIYKGFDSLLNAASSGLPVDLSTLPVPP) is DM14 4. The 140-residue stretch at 633–772 (RKGQPLPKFH…ETKCDIHDTY (140 aa)) folds into the C2 domain.

This sequence belongs to the CC2D1 family. Interacts (via DM14 domains 1 and 3) with shrb; the interaction is direct and blocks access to the surface involved in shrb polymerization. This interaction may be required for the ESCRT-III complex role in multivesicular body formation.

It localises to the cytoplasm. It is found in the cytosol. The protein resides in the apicolateral cell membrane. Its subcellular location is the cell cortex. The protein localises to the endosome. Phosphatidyl inositol monophosphate binding protein involved in endosomal protein sorting through regulation of the endosomal sorting required for transport (ESCRT) pathway. Required for full activity of the ESCRT-III complex core component shrb/shrub, probably by preventing its inappropriate polymerisation. Required, but not essential, for the efficient generation of intraluminal vesicles (ILVs) in multivesicular bodies (MVBs). Involved in a late stage of the endosomal pathway targeting transmembrane proteins of the plasma membrane for lysosomal degradation. Plays a critical role in regulation of multiple signal transduction pathways, including the Notch and BMP/decapentaplegic (dpp) signaling pathways, through targeting of membrane bound receptors to multivesicular bodies, isolating them from the cytoplasm and targeting them for lysosomal degradation. Involved in targeting N/Notch for endosomal degradation, negatively regulating the Notch signaling pathway. Regulates Notch signaling in imaginal disk cells and follicle cells during oogenesis and multiple developmental processes, including development of wings, veins, legs, eyes and bristles. Restricts the activity of Notch to the dorsoventral (D/V) boundary of the wing imaginal disk. In external sensory organ development regulates Notch signaling during asymmetric cell division and differentiation of sensory organ precursor cells. May be involved in regulation of apoptosis and cell growth independent of Notch signaling. Involved in targeting tkv for endosomal degradation, negatively regulating the BMP/decapentaplegic (dpp) signaling pathway. Regulates the BMP/dpp signaling pathway in follicle cells during oogenesis, but not in imaginal disk cells during wing development. May be involved in differentiation or morphogenesis of peripodial epithelial cells in the developing imaginal disk. Involved in abscission of germline cells during oogenesis. This is Coiled-coil and C2 domain-containing protein 1-like from Drosophila pseudoobscura pseudoobscura (Fruit fly).